A 90-amino-acid chain; its full sequence is MKFRPLGERVLVERVEEDTKTSSGIIIPDNAKEKPLMGIVKAVSAKIKDDKILKENDKVVFGKYKGAEIKLDSKEFIVLELDDILGVIEK.

This sequence belongs to the GroES chaperonin family. As to quaternary structure, heptamer of 7 subunits arranged in a ring. Interacts with the chaperonin GroEL.

The protein localises to the cytoplasm. Its function is as follows. Together with the chaperonin GroEL, plays an essential role in assisting protein folding. The GroEL-GroES system forms a nano-cage that allows encapsulation of the non-native substrate proteins and provides a physical environment optimized to promote and accelerate protein folding. GroES binds to the apical surface of the GroEL ring, thereby capping the opening of the GroEL channel. This is Co-chaperonin GroES from Helicobacter hepaticus (strain ATCC 51449 / 3B1).